The sequence spans 455 residues: tRNA-2-methylthio-N(6)-dimethylallyladenosine synthase (455 aa).

Positions 18-136 (KLFFIQTYGC…FPEYLNRVKT (119 aa)) constitute an MTTase N-terminal domain. [4Fe-4S] cluster is bound by residues Cys-27, Cys-63, Cys-97, Cys-173, Cys-177, and Cys-180. The Radical SAM core domain maps to 159–389 (RKSDIKGFVT…VEIVNTGIAK (231 aa)). The TRAM domain occupies 392–455 (KDAEGKIYEV…SFSLIGEVEK (64 aa)).

The protein belongs to the methylthiotransferase family. MiaB subfamily. In terms of assembly, monomer. It depends on [4Fe-4S] cluster as a cofactor.

Its subcellular location is the cytoplasm. It carries out the reaction N(6)-dimethylallyladenosine(37) in tRNA + (sulfur carrier)-SH + AH2 + 2 S-adenosyl-L-methionine = 2-methylsulfanyl-N(6)-dimethylallyladenosine(37) in tRNA + (sulfur carrier)-H + 5'-deoxyadenosine + L-methionine + A + S-adenosyl-L-homocysteine + 2 H(+). Its function is as follows. Catalyzes the methylthiolation of N6-(dimethylallyl)adenosine (i(6)A), leading to the formation of 2-methylthio-N6-(dimethylallyl)adenosine (ms(2)i(6)A) at position 37 in tRNAs that read codons beginning with uridine. The polypeptide is tRNA-2-methylthio-N(6)-dimethylallyladenosine synthase (Clostridium beijerinckii (strain ATCC 51743 / NCIMB 8052) (Clostridium acetobutylicum)).